Reading from the N-terminus, the 227-residue chain is Cytochrome c oxidase subunit 2 (227 aa).

Topologically, residues M1–S14 are mitochondrial intermembrane. The helical transmembrane segment at P15–M45 threads the bilayer. Over L46–Q59 the chain is Mitochondrial matrix. The chain crosses the membrane as a helical span at residues E60–M87. Over D88 to T227 the chain is Mitochondrial intermembrane. H161, C196, E198, C200, H204, and M207 together coordinate Cu cation. Residue E198 participates in Mg(2+) binding.

The protein belongs to the cytochrome c oxidase subunit 2 family. As to quaternary structure, component of the cytochrome c oxidase (complex IV, CIV), a multisubunit enzyme composed of 14 subunits. The complex is composed of a catalytic core of 3 subunits MT-CO1, MT-CO2 and MT-CO3, encoded in the mitochondrial DNA, and 11 supernumerary subunits COX4I, COX5A, COX5B, COX6A, COX6B, COX6C, COX7A, COX7B, COX7C, COX8 and NDUFA4, which are encoded in the nuclear genome. The complex exists as a monomer or a dimer and forms supercomplexes (SCs) in the inner mitochondrial membrane with NADH-ubiquinone oxidoreductase (complex I, CI) and ubiquinol-cytochrome c oxidoreductase (cytochrome b-c1 complex, complex III, CIII), resulting in different assemblies (supercomplex SCI(1)III(2)IV(1) and megacomplex MCI(2)III(2)IV(2)). Found in a complex with TMEM177, COA6, COX18, COX20, SCO1 and SCO2. Interacts with TMEM177 in a COX20-dependent manner. Interacts with COX20. Interacts with COX16. It depends on Cu cation as a cofactor.

Its subcellular location is the mitochondrion inner membrane. It catalyses the reaction 4 Fe(II)-[cytochrome c] + O2 + 8 H(+)(in) = 4 Fe(III)-[cytochrome c] + 2 H2O + 4 H(+)(out). In terms of biological role, component of the cytochrome c oxidase, the last enzyme in the mitochondrial electron transport chain which drives oxidative phosphorylation. The respiratory chain contains 3 multisubunit complexes succinate dehydrogenase (complex II, CII), ubiquinol-cytochrome c oxidoreductase (cytochrome b-c1 complex, complex III, CIII) and cytochrome c oxidase (complex IV, CIV), that cooperate to transfer electrons derived from NADH and succinate to molecular oxygen, creating an electrochemical gradient over the inner membrane that drives transmembrane transport and the ATP synthase. Cytochrome c oxidase is the component of the respiratory chain that catalyzes the reduction of oxygen to water. Electrons originating from reduced cytochrome c in the intermembrane space (IMS) are transferred via the dinuclear copper A center (CU(A)) of subunit 2 and heme A of subunit 1 to the active site in subunit 1, a binuclear center (BNC) formed by heme A3 and copper B (CU(B)). The BNC reduces molecular oxygen to 2 water molecules using 4 electrons from cytochrome c in the IMS and 4 protons from the mitochondrial matrix. This Cratogeomys castanops (Yellow-faced pocket gopher) protein is Cytochrome c oxidase subunit 2 (MT-CO2).